Reading from the N-terminus, the 75-residue chain is Sec-independent protein translocase protein TatA (75 aa).

Residues 1–21 (MGSFSIWHWLIVLVIIALVFG) traverse the membrane as a helical segment. Residues 45–75 (DASADKPADQVTQQRVSDDTIDVQAKEKSNS) are disordered.

The protein belongs to the TatA/E family. The Tat system comprises two distinct complexes: a TatABC complex, containing multiple copies of TatA, TatB and TatC subunits, and a separate TatA complex, containing only TatA subunits. Substrates initially bind to the TatABC complex, which probably triggers association of the separate TatA complex to form the active translocon.

Its subcellular location is the cell inner membrane. Part of the twin-arginine translocation (Tat) system that transports large folded proteins containing a characteristic twin-arginine motif in their signal peptide across membranes. TatA could form the protein-conducting channel of the Tat system. This is Sec-independent protein translocase protein TatA from Bordetella bronchiseptica (strain ATCC BAA-588 / NCTC 13252 / RB50) (Alcaligenes bronchisepticus).